A 402-amino-acid chain; its full sequence is Probable glutamate 5-kinase (402 aa).

Substrate is bound by residues serine 58, aspartate 145, and asparagine 157. Residues 177–178 (TD) and 218–224 (TGGMKTK) each bind ATP. The PUA domain maps to 295-373 (HGSLEIDRGA…KEIASILGYN (79 aa)).

It belongs to the glutamate 5-kinase family.

It is found in the cytoplasm. It catalyses the reaction L-glutamate + ATP = L-glutamyl 5-phosphate + ADP. It participates in amino-acid biosynthesis; L-proline biosynthesis; L-glutamate 5-semialdehyde from L-glutamate: step 1/2. Catalyzes the transfer of a phosphate group to glutamate to form glutamate 5-phosphate which rapidly cyclizes to 5-oxoproline. The protein is Probable glutamate 5-kinase of Schizosaccharomyces pombe (strain 972 / ATCC 24843) (Fission yeast).